A 126-amino-acid polypeptide reads, in one-letter code: Thioredoxin domain-containing protein, mitochondrial (126 aa).

Residues 14–120 (SQKIATNTSF…ILEFLNHIET (107 aa)) form the Thioredoxin domain.

This sequence belongs to the thioredoxin family.

It is found in the mitochondrion. This chain is Thioredoxin domain-containing protein, mitochondrial, found in Dictyostelium discoideum (Social amoeba).